We begin with the raw amino-acid sequence, 402 residues long: mRNA-capping enzyme subunit alpha (402 aa).

The N6-GMP-lysine intermediate role is filled by lysine 67. Positions 374–402 are disordered; that stretch reads SVTKRKLDETSNDDAPAIKKVAKESEKEI.

The protein belongs to the eukaryotic GTase family. Heterodimer. The mRNA-capping enzyme is composed of two separate chains alpha and beta, respectively a mRNA guanylyltransferase and an mRNA 5'-triphosphate monophosphatase.

Its subcellular location is the nucleus. The catalysed reaction is a 5'-end diphospho-ribonucleoside in mRNA + GTP + H(+) = a 5'-end (5'-triphosphoguanosine)-ribonucleoside in mRNA + diphosphate. Its function is as follows. Second step of mRNA capping. Transfer of the GMP moiety of GTP to the 5'-end of RNA via an enzyme-GMP covalent reaction intermediate. The polypeptide is mRNA-capping enzyme subunit alpha (ceg1) (Schizosaccharomyces pombe (strain 972 / ATCC 24843) (Fission yeast)).